A 109-amino-acid polypeptide reads, in one-letter code: Nucleoid-associated protein APL_0075 (109 aa).

The segment at 1–21 is disordered; that stretch reads MFGKGGLGGLMKQAQQMQERM. Residues 10–19 are compositionally biased toward low complexity; it reads LMKQAQQMQE.

Belongs to the YbaB/EbfC family. In terms of assembly, homodimer.

Its subcellular location is the cytoplasm. It localises to the nucleoid. Functionally, binds to DNA and alters its conformation. May be involved in regulation of gene expression, nucleoid organization and DNA protection. This chain is Nucleoid-associated protein APL_0075, found in Actinobacillus pleuropneumoniae serotype 5b (strain L20).